Reading from the N-terminus, the 184-residue chain is Photosystem I assembly protein Ycf4 (184 aa).

2 consecutive transmembrane segments (helical) span residues 19–39 (ISNL…VLVG) and 57–77 (IIFF…LFIS).

The protein belongs to the Ycf4 family.

The protein resides in the plastid thylakoid membrane. Functionally, seems to be required for the assembly of the photosystem I complex. In Cuscuta reflexa (Southern Asian dodder), this protein is Photosystem I assembly protein Ycf4.